The chain runs to 619 residues: Guanylate cyclase soluble subunit beta-1 (619 aa).

Residue H105 participates in heme binding. Residues 421-554 enclose the Guanylate cyclase domain; sequence TILFSGIVGF…NTVNLTSRTE (134 aa).

This sequence belongs to the adenylyl cyclase class-4/guanylyl cyclase family. In terms of assembly, the active enzyme is formed by a heterodimer of an alpha and a beta subunit. Homotetramer; dimer of dimers (in vitro). Heterodimer with GUCY1A1. Can also form inactive homodimers in vitro. Requires heme as cofactor. Lung and brain.

It localises to the cytoplasm. It carries out the reaction GTP = 3',5'-cyclic GMP + diphosphate. With respect to regulation, activated by nitric oxide in the presence of magnesium or manganese ions. In terms of biological role, mediates responses to nitric oxide (NO) by catalyzing the biosynthesis of the signaling molecule cGMP. The protein is Guanylate cyclase soluble subunit beta-1 (Gucy1b1) of Rattus norvegicus (Rat).